We begin with the raw amino-acid sequence, 514 residues long: Arabinose import ATP-binding protein AraG (514 aa).

ABC transporter domains follow at residues 16–251 and 251–507; these read LRFN…MVGR and RDIQ…LPRH. 48 to 55 lines the ATP pocket; sequence GENGAGKS.

Belongs to the ABC transporter superfamily. Arabinose importer (TC 3.A.1.2.2) family. As to quaternary structure, the complex is composed of two ATP-binding proteins (AraG), two transmembrane proteins (AraH) and a solute-binding protein (AraF).

The protein resides in the cell inner membrane. The catalysed reaction is L-arabinose(out) + ATP + H2O = L-arabinose(in) + ADP + phosphate + H(+). Part of the ABC transporter complex AraFGH involved in arabinose import. Responsible for energy coupling to the transport system. This is Arabinose import ATP-binding protein AraG from Pseudomonas fluorescens (strain Pf0-1).